The sequence spans 304 residues: MEKNFKVAALYCFADLKHYRQLQKPLLDLCQAKDIKGTLLLAQEGINGTIAGSCRAIEELVNFIKTEPAFQTPEIKYSWASKMPFHRMKVRLKKEIVTMGVEGINPLKIVGTYVDPEDWNALIQDEETLLIDTRNDYEYAIGSFQGAIDPGIKTFREFPEWVRKHEADLKKKKKMAMFCTGGIRCEKSTAYVRELGYEQVYHLKGGILKYLETIPKEESLWWGECFVFDERVSVKHGLEECGRELCRACRSPLNAEGKLSPHYEAGVSCDACYNKRSEVDRERFRERHRQIQLSKLRAMHSHQE.

In terms of domain architecture, Rhodanese spans 124 to 219 (QDEETLLIDT…YLETIPKEES (96 aa)). Catalysis depends on Cys179, which acts as the Cysteine persulfide intermediate.

The protein belongs to the TrhO family.

The enzyme catalyses uridine(34) in tRNA + AH2 + O2 = 5-hydroxyuridine(34) in tRNA + A + H2O. Catalyzes oxygen-dependent 5-hydroxyuridine (ho5U) modification at position 34 in tRNAs. In Bartonella quintana (strain Toulouse) (Rochalimaea quintana), this protein is tRNA uridine(34) hydroxylase.